Consider the following 353-residue polypeptide: Photosystem II protein D1 (353 aa).

An N-acetylthreonine modification is found at threonine 2. Threonine 2 bears the Phosphothreonine mark. Helical transmembrane passes span 29–46 (YIGWFGVLMIPTLLTATS), 118–133 (HFLLGVACYMGREWEL), and 142–156 (WIAVAYSAPVAAAAA). Histidine 118 is a binding site for chlorophyll a. Residue tyrosine 126 participates in pheophytin a binding. Positions 170 and 189 each coordinate [CaMn4O5] cluster. The chain crosses the membrane as a helical span at residues 197–218 (FHMLGVAGVFGGSLFSAMHGSL). Histidine 198 contributes to the chlorophyll a binding site. A quinone-binding positions include histidine 215 and 264-265 (SF). Position 215 (histidine 215) interacts with Fe cation. Histidine 272 is a binding site for Fe cation. Residues 274 to 288 (FLAAWPVVGIWFTAL) traverse the membrane as a helical segment. The [CaMn4O5] cluster site is built by histidine 332, glutamate 333, aspartate 342, and alanine 344. Residues 345 to 353 (AVEAPSTNG) constitute a propeptide that is removed on maturation.

It belongs to the reaction center PufL/M/PsbA/D family. PSII is composed of 1 copy each of membrane proteins PsbA, PsbB, PsbC, PsbD, PsbE, PsbF, PsbH, PsbI, PsbJ, PsbK, PsbL, PsbM, PsbT, PsbX, PsbY, PsbZ, Psb30/Ycf12, at least 3 peripheral proteins of the oxygen-evolving complex and a large number of cofactors. It forms dimeric complexes. Requires The D1/D2 heterodimer binds P680, chlorophylls that are the primary electron donor of PSII, and subsequent electron acceptors. It shares a non-heme iron and each subunit binds pheophytin, quinone, additional chlorophylls, carotenoids and lipids. D1 provides most of the ligands for the Mn4-Ca-O5 cluster of the oxygen-evolving complex (OEC). There is also a Cl(-1) ion associated with D1 and D2, which is required for oxygen evolution. The PSII complex binds additional chlorophylls, carotenoids and specific lipids. as cofactor. Tyr-161 forms a radical intermediate that is referred to as redox-active TyrZ, YZ or Y-Z. Post-translationally, C-terminally processed by CTPA; processing is essential to allow assembly of the oxygen-evolving complex and thus photosynthetic growth.

It is found in the plastid. Its subcellular location is the chloroplast thylakoid membrane. The catalysed reaction is 2 a plastoquinone + 4 hnu + 2 H2O = 2 a plastoquinol + O2. Its function is as follows. Photosystem II (PSII) is a light-driven water:plastoquinone oxidoreductase that uses light energy to abstract electrons from H(2)O, generating O(2) and a proton gradient subsequently used for ATP formation. It consists of a core antenna complex that captures photons, and an electron transfer chain that converts photonic excitation into a charge separation. The D1/D2 (PsbA/PsbD) reaction center heterodimer binds P680, the primary electron donor of PSII as well as several subsequent electron acceptors. The polypeptide is Photosystem II protein D1 (Panax ginseng (Korean ginseng)).